The sequence spans 191 residues: 3-isopropylmalate dehydratase small subunit (191 aa).

This sequence belongs to the LeuD family. LeuD type 1 subfamily. As to quaternary structure, heterodimer of LeuC and LeuD.

It carries out the reaction (2R,3S)-3-isopropylmalate = (2S)-2-isopropylmalate. Its pathway is amino-acid biosynthesis; L-leucine biosynthesis; L-leucine from 3-methyl-2-oxobutanoate: step 2/4. Catalyzes the isomerization between 2-isopropylmalate and 3-isopropylmalate, via the formation of 2-isopropylmaleate. The chain is 3-isopropylmalate dehydratase small subunit from Solibacter usitatus (strain Ellin6076).